Consider the following 174-residue polypeptide: Recombination protein RecR (174 aa).

The C4-type zinc finger occupies 30–45; the sequence is CNACRTFTEEEECTIC. Residues 54–149 enclose the Toprim domain; sequence GQLCIVEMPE…KVTRIAHGIP (96 aa).

The protein belongs to the RecR family.

In terms of biological role, may play a role in DNA repair. It seems to be involved in an RecBC-independent recombinational process of DNA repair. It may act with RecF and RecO. The polypeptide is Recombination protein RecR (Haemophilus ducreyi (strain 35000HP / ATCC 700724)).